We begin with the raw amino-acid sequence, 111 residues long: Photosystem II reaction center Psb28 protein (111 aa).

Belongs to the Psb28 family. Part of the photosystem II complex.

It is found in the cellular thylakoid membrane. The polypeptide is Photosystem II reaction center Psb28 protein (Gloeothece citriformis (strain PCC 7424) (Cyanothece sp. (strain PCC 7424))).